The following is a 158-amino-acid chain: MLLFALLLAMELPLVAASATMRAQWTYSLRCHDCAVINDFNCPNIRVCPYHIRRCMTISIRINSRELLVYKNCTNNCTFVYAAEQPPEAPGKIFKTNSFYWVCCCNSMVCNAGGPTNLERDMLPDEVTEEELPEGTVRLGVSKLLLSFASIIVSNILP.

The first 17 residues, 1-17 (MLLFALLLAMELPLVAA), serve as a signal peptide directing secretion. The UPAR/Ly6 domain maps to 29-134 (LRCHDCAVIN…DEVTEEELPE (106 aa)). 5 disulfide bridges follow: Cys31/Cys55, Cys34/Cys42, Cys48/Cys73, Cys77/Cys104, and Cys105/Cys110.

The protein resides in the cell membrane. Its function is as follows. May play a role in the apoptotic pathway or cell-cycle regulation induced by p53/TP53 after DNA damage. The chain is Glycosyl-phosphatidylinositol-anchored molecule-like protein (GML) from Homo sapiens (Human).